The following is a 154-amino-acid chain: U1 small nuclear ribonucleoprotein C (154 aa).

The segment at 4–36 (YYCDYCDTYLTHDSPSVRKTHCTGRKHKDNVKF) adopts a Matrin-type zinc-finger fold.

This sequence belongs to the U1 small nuclear ribonucleoprotein C family. In terms of assembly, U1 snRNP is composed of the 7 core Sm proteins B/B', D1, D2, D3, E, F and G that assemble in a heptameric protein ring on the Sm site of the small nuclear RNA to form the core snRNP, and at least 3 U1 snRNP-specific proteins U1-70K, U1-A and U1-C. U1-C interacts with U1 snRNA and the 5' splice-site region of the pre-mRNA.

Its subcellular location is the nucleus. In terms of biological role, component of the spliceosomal U1 snRNP, which is essential for recognition of the pre-mRNA 5' splice-site and the subsequent assembly of the spliceosome. U1-C is directly involved in initial 5' splice-site recognition for both constitutive and regulated alternative splicing. The interaction with the 5' splice-site seems to precede base-pairing between the pre-mRNA and the U1 snRNA. Stimulates commitment or early (E) complex formation by stabilizing the base pairing of the 5' end of the U1 snRNA and the 5' splice-site region. This chain is U1 small nuclear ribonucleoprotein C, found in Aedes aegypti (Yellowfever mosquito).